Reading from the N-terminus, the 476-residue chain is Exodeoxyribonuclease 7 large subunit (476 aa).

It belongs to the XseA family. Heterooligomer composed of large and small subunits.

The protein resides in the cytoplasm. It carries out the reaction Exonucleolytic cleavage in either 5'- to 3'- or 3'- to 5'-direction to yield nucleoside 5'-phosphates.. Its function is as follows. Bidirectionally degrades single-stranded DNA into large acid-insoluble oligonucleotides, which are then degraded further into small acid-soluble oligonucleotides. In Bartonella bacilliformis (strain ATCC 35685 / KC583 / Herrer 020/F12,63), this protein is Exodeoxyribonuclease 7 large subunit.